A 202-amino-acid polypeptide reads, in one-letter code: Guanylate kinase (202 aa).

In terms of domain architecture, Guanylate kinase-like spans glycine 3–arginine 181. ATP is bound at residue alanine 10–threonine 17.

This sequence belongs to the guanylate kinase family.

Its subcellular location is the cytoplasm. It catalyses the reaction GMP + ATP = GDP + ADP. Its function is as follows. Essential for recycling GMP and indirectly, cGMP. The polypeptide is Guanylate kinase (Methylobacillus flagellatus (strain ATCC 51484 / DSM 6875 / VKM B-1610 / KT)).